A 416-amino-acid polypeptide reads, in one-letter code: Calreticulin (416 aa).

Residues 1 to 27 (MATQRRANPSSLHLITVFSLLVAVVSA) form the signal peptide. Residue Asn-59 is glycosylated (N-linked (GlcNAc...) asparagine). A disulfide bridge connects residues Cys-113 and Cys-145. The an alpha-D-glucoside site is built by Tyr-117, Lys-119, Tyr-136, and Asp-143. A glycan (N-linked (GlcNAc...) asparagine) is linked at Asn-159. Tandem repeats lie at residues 199–210 (KQSGSLYSDWDL), 218–229 (DPSAKKPEDWDE), 235–246 (DPEDKKPEGYDD), 253–264 (DPDAKKPEDWDD), 268–278 (GEWTAPTIPNP), 282–292 (GPWKPKKIKNP), and 296–306 (GKWKAPLIDNP). Positions 199–264 (KQSGSLYSDW…DAKKPEDWDD (66 aa)) are 4 X approximate repeats. Residues 215–225 (TIKDPSAKKPE) are compositionally biased toward basic and acidic residues. A disordered region spans residues 215 to 286 (TIKDPSAKKP…NPEYKGPWKP (72 aa)). Acidic residues-rich tracts occupy residues 226-236 (DWDEKEFIDDP) and 244-253 (YDDIPEEITD). The tract at residues 268 to 306 (GEWTAPTIPNPEYKGPWKPKKIKNPNYKGKWKAPLIDNP) is 3 X approximate repeats. Residue Glu-326 coordinates an alpha-D-glucoside. Residues 355 to 380 (TWGKQKDAEKAAFEEAEKKREEEESK) show a composition bias toward basic and acidic residues. The disordered stretch occupies residues 355–416 (TWGKQKDAEK…SKDDEAHDEL (62 aa)). The segment covering 386-403 (SDAEEDDDADDDSDDADD) has biased composition (acidic residues). The span at 404–416 (KSESKDDEAHDEL) shows a compositional bias: basic and acidic residues. The short motif at 413–416 (HDEL) is the Prevents secretion from ER element.

It belongs to the calreticulin family.

It localises to the endoplasmic reticulum lumen. Its function is as follows. Molecular calcium-binding chaperone promoting folding, oligomeric assembly and quality control in the ER via the calreticulin/calnexin cycle. This lectin may interact transiently with almost all of the monoglucosylated glycoproteins that are synthesized in the ER. The sequence is that of Calreticulin (CAL1) from Nicotiana plumbaginifolia (Leadwort-leaved tobacco).